The following is a 228-amino-acid chain: 3,4-dihydroxy-2-butanone 4-phosphate synthase (228 aa).

D-ribulose 5-phosphate-binding positions include 37-38, D42, 150-154, and E174; these read RE and RRGHT. E38 is a Mg(2+) binding site. Position 153 (H153) interacts with Mg(2+).

The protein belongs to the DHBP synthase family. As to quaternary structure, homodimer. It depends on Mg(2+) as a cofactor. The cofactor is Mn(2+).

It catalyses the reaction D-ribulose 5-phosphate = (2S)-2-hydroxy-3-oxobutyl phosphate + formate + H(+). It functions in the pathway cofactor biosynthesis; riboflavin biosynthesis; 2-hydroxy-3-oxobutyl phosphate from D-ribulose 5-phosphate: step 1/1. In terms of biological role, catalyzes the conversion of D-ribulose 5-phosphate to formate and 3,4-dihydroxy-2-butanone 4-phosphate. The protein is 3,4-dihydroxy-2-butanone 4-phosphate synthase of Photobacterium profundum (strain SS9).